We begin with the raw amino-acid sequence, 391 residues long: 3-ketoacyl-CoA thiolase (391 aa).

Cysteine 95 (acyl-thioester intermediate) is an active-site residue. Catalysis depends on proton acceptor residues histidine 347 and cysteine 377.

It belongs to the thiolase-like superfamily. Thiolase family. As to quaternary structure, heterotetramer of two alpha chains (FadB) and two beta chains (FadA).

The protein localises to the cytoplasm. The enzyme catalyses an acyl-CoA + acetyl-CoA = a 3-oxoacyl-CoA + CoA. It functions in the pathway lipid metabolism; fatty acid beta-oxidation. Catalyzes the final step of fatty acid oxidation in which acetyl-CoA is released and the CoA ester of a fatty acid two carbons shorter is formed. This Pseudomonas fluorescens (strain ATCC BAA-477 / NRRL B-23932 / Pf-5) protein is 3-ketoacyl-CoA thiolase.